The following is a 257-amino-acid chain: UPF0246 protein Rpic_2164 (257 aa).

Belongs to the UPF0246 family.

The protein is UPF0246 protein Rpic_2164 of Ralstonia pickettii (strain 12J).